Here is a 189-residue protein sequence, read N- to C-terminus: Holliday junction branch migration complex subunit RuvA (189 aa).

The tract at residues 1–63 is domain I; it reads MIHALNGKVE…DDGISLYGFL (63 aa). The interval 64 to 135 is domain II; sequence EVIKLKLFEK…ELKDTIKELD (72 aa). The tract at residues 135-139 is flexible linker; sequence DVSIN. Positions 140 to 189 are domain III; it reads EKDRKVLEAIEALVTLGFNRNQAKKAVNKVAAKDDKLDDIIKKALRFLSR.

Belongs to the RuvA family. In terms of assembly, homotetramer. Forms an RuvA(8)-RuvB(12)-Holliday junction (HJ) complex. HJ DNA is sandwiched between 2 RuvA tetramers; dsDNA enters through RuvA and exits via RuvB. An RuvB hexamer assembles on each DNA strand where it exits the tetramer. Each RuvB hexamer is contacted by two RuvA subunits (via domain III) on 2 adjacent RuvB subunits; this complex drives branch migration. In the full resolvosome a probable DNA-RuvA(4)-RuvB(12)-RuvC(2) complex forms which resolves the HJ.

It is found in the cytoplasm. The RuvA-RuvB-RuvC complex processes Holliday junction (HJ) DNA during genetic recombination and DNA repair, while the RuvA-RuvB complex plays an important role in the rescue of blocked DNA replication forks via replication fork reversal (RFR). RuvA specifically binds to HJ cruciform DNA, conferring on it an open structure. The RuvB hexamer acts as an ATP-dependent pump, pulling dsDNA into and through the RuvAB complex. HJ branch migration allows RuvC to scan DNA until it finds its consensus sequence, where it cleaves and resolves the cruciform DNA. This is Holliday junction branch migration complex subunit RuvA from Thermosipho africanus (strain TCF52B).